Here is a 131-residue protein sequence, read N- to C-terminus: Small ribosomal subunit protein uS8 (131 aa).

It belongs to the universal ribosomal protein uS8 family. Part of the 30S ribosomal subunit. Contacts proteins S5 and S12.

One of the primary rRNA binding proteins, it binds directly to 16S rRNA central domain where it helps coordinate assembly of the platform of the 30S subunit. In Dehalococcoides mccartyi (strain CBDB1), this protein is Small ribosomal subunit protein uS8.